A 1503-amino-acid polypeptide reads, in one-letter code: MSKQQRRKGNAKNASSASAHGYLAQGGENFVGLTPEMNIFEMASSNRLSNFSGIDDETRIVMRKLTKKDCQTREKGLRELTNIIAETSSIENCYEHFCGLVPQLSTDGSPTVRLLTMKTITLFLVKLEKSACKGLKKIIPMVLFARCDVTNGVAAAAGAVIRDGFEADKKQKVIQLFAPLVFEMAAKIVQGKHDLSVPVEYDASEDREARKSRLETQSLNVFLSYIKEFGADSTIWEEEARKLFENIAFLKMVFGGTNAALKVQVLNLAYRFKNNVEVILNTPSIVTYIQNHLDSQTFTPECSTAWEGMIILLPSAQFHTKVSLQNGIYPRFLNVIRKKGNHWRVLQHFLLPAVVLLLKEMGSLENNMKVLGTIMESFTDNLPWPTDASINAVLSWFNAFSDFVRWILTNDRINLVVWEKLHPLIVTVTEQAMTFPTKEIAECVTDLLQWIIELKTINEADVSTLLLNIESKIVGAGTENSRLIKHLLTEPGKNIVLSNLHANLLSSPELVDFQIIKNLSCSENDYFNATSQKISNFSFIEKTENFDITQAGDIVRLIKLLLENQEIKSLNISVKNDHVGRRLLLTGGSTIWNKLLKNVPVSTFQNMINYWHEKRNGTAIADAVSFLKEMGVEMDTKQAAENVEFLITLLRKMKSTDVSNEAEKNVLILKLFTAIFESDEDAKSEHYNCLSEHLTSDFNSGQFFEKLFASSEEYDIERILETACRVDKLIDLCEEQTRQNIVNNVLLSGKQCGTIIEQFQFLELEVMSCSTKPTVISTTHQHCYSHLDEHKAKEIVTESARIALFNISSKCECFFLISHEQFFFSDYNSAHQVFGWQVISIISALEKRYSLVALTEELQRSRREIEERLIRSDEVRFKLDDSSPCIFLADAYDMSFEQKKKYIQCQAEPSKVPEHALEVLYRENQTPLDFLMNVFEGGYQMFDFDRSKNYHWMINLMFVKKCIQYGGSIFVAEESGLRDYALCGIVTVLDIHKRSTLQQSTDILGNTPNAFDEDPRLEALTTLFIELYLVLNDSIKNDNHPTQTIEEWKEFYVPTINSLFIRMFRMIRKEQQPTPFVRTLLKAMFTLVEFPTNVPNDSVVTREFVPELSVFKYSLLEESFIAQAFILLSSNVEHVQLIGYAAAKLLVPIMFKTENPQVLDDDQDETEIMVANRSKLNLPVMISKSYPVDHIHKHVGPLLLSLAILPLETTKEFVLNQEQRVAYCDAIDSFFKNALNALMLDQPFDFSQVPIVCKIRKQMYFFQFRYSSHFFTAKSQEREYYLQSDLTASPLFFEKFASRLLFKSITLLPAAVRLFHKNIPNNFKPIFQEVVTKHASKLLIENELNKVQNAEFGEVLKVRTVPVTGQIISEYTVEDTKMKLTIELPRDYPLSVPAMNLDKAIVKGDRAKKWLLQLNAYLFHQNGAILEGIEMWKRNVDKGIEGAEDCTICMMTVHQQTNQLPKVKCKQCKNRFHSNCLVSSFHTYKWFESSNQSTCPLCRNNFT.

HEAT repeat units follow at residues 52-89 (SGID…ETSS), 93-129 (CYEH…KLEK), 133-170 (KGLK…ADKK), 280-318 (LNTP…SAQF), 323-345 (SLQN…HWRV), 346-384 (LQHF…NLPW), 552-589 (GDIV…TGGS), 640-663 (AENV…NEAE), 664-700 (KNVL…DFNS), 845-882 (LEKR…LDDS), 1022-1065 (TLFI…RMFR), 1078-1117 (RTLL…SLLE), 1141-1183 (AAAK…VMIS), and 1302-1340 (FKSI…KLLI). The RING-type zinc finger occupies 1446–1499 (CTICMMTVHQQTNQLPKVKCKQCKNRFHSNCLVSSFHTYKWFESSNQSTCPLCR).

It belongs to the LTN1 family. In terms of assembly, component of the ribosome quality control complex (RQC), composed of at least the E3 ubiquitin ligase ltn1 and nemf. The complex probably also contains tcf25 as well as vcp/p97 and its ubiquitin-binding cofactors. RQC forms a stable complex with 60S ribosomal subunits.

It is found in the cytoplasm. It localises to the cytosol. The enzyme catalyses S-ubiquitinyl-[E2 ubiquitin-conjugating enzyme]-L-cysteine + [acceptor protein]-L-lysine = [E2 ubiquitin-conjugating enzyme]-L-cysteine + N(6)-ubiquitinyl-[acceptor protein]-L-lysine.. It functions in the pathway protein modification; protein ubiquitination. E3 ubiquitin-protein ligase. Component of the ribosome quality control complex (RQC), a ribosome-associated complex that mediates ubiquitination and extraction of incompletely synthesized nascent chains for proteasomal degradation. Ubiquitination leads to vcp/p97 recruitment for extraction and degradation of the incomplete translation product. This is E3 ubiquitin-protein ligase listerin from Caenorhabditis briggsae.